A 189-amino-acid chain; its full sequence is Cell division protein SepF (189 aa).

2 disordered regions span residues 1 to 75 (MEGQ…GLPG) and 155 to 174 (STPSSQGMPPLQRPLQSPTP).

Belongs to the SepF family. In terms of assembly, homodimer. Interacts with FtsZ.

The protein resides in the cytoplasm. Its function is as follows. Cell division protein that is part of the divisome complex and is recruited early to the Z-ring. Probably stimulates Z-ring formation, perhaps through the cross-linking of FtsZ protofilaments. Its function overlaps with FtsA. This is Cell division protein SepF from Synechococcus sp. (strain JA-3-3Ab) (Cyanobacteria bacterium Yellowstone A-Prime).